The sequence spans 122 residues: Big defensin (122 aa).

The N-terminal stretch at 1–28 (MTRPSLVRCYSLFFTALIVMAIICPAWS) is a signal peptide. Positions 29 to 34 (EEIPKS) are excised as a propeptide. 3 disulfides stabilise this stretch: cysteine 88–cysteine 119, cysteine 95–cysteine 114, and cysteine 99–cysteine 120.

The protein belongs to the big defensin family. As to expression, expressed in hemocytes.

It is found in the secreted. In terms of biological role, significantly inhibits the growth of Gram-negative and Gram-positive bacteria and fungi in vitro. The sequence is that of Big defensin from Argopecten irradians (Bay scallop).